Reading from the N-terminus, the 1275-residue chain is ATP-dependent helicase/nuclease subunit A (1275 aa).

The 478-residue stretch at 4-481 (PKWTKEQLEV…IMLYKNFRSR (478 aa)) folds into the UvrD-like helicase ATP-binding domain. 25 to 32 (AAAGSGKT) provides a ligand contact to ATP. The 309-residue stretch at 531–839 (TEIHLIQKDN…RIMSIHKSKG (309 aa)) folds into the UvrD-like helicase C-terminal domain.

The protein belongs to the helicase family. AddA subfamily. In terms of assembly, heterodimer of AddA and AddB/RexB. The cofactor is Mg(2+).

The catalysed reaction is Couples ATP hydrolysis with the unwinding of duplex DNA by translocating in the 3'-5' direction.. It carries out the reaction ATP + H2O = ADP + phosphate + H(+). In terms of biological role, the heterodimer acts as both an ATP-dependent DNA helicase and an ATP-dependent, dual-direction single-stranded exonuclease. Recognizes the chi site generating a DNA molecule suitable for the initiation of homologous recombination. The AddA nuclease domain is required for chi fragment generation; this subunit has the helicase and 3' -&gt; 5' nuclease activities. The polypeptide is ATP-dependent helicase/nuclease subunit A (Clostridioides difficile (strain 630) (Peptoclostridium difficile)).